The sequence spans 190 residues: Ganglioside GM2 activator (190 aa).

Positions 1–23 are cleaved as a signal peptide; the sequence is MQSLMQAPVLIALGLLFAAPAQA. Disulfide bonds link cysteine 36/cysteine 180, cysteine 96/cysteine 103, cysteine 109/cysteine 135, and cysteine 122/cysteine 133. Residue asparagine 60 is glycosylated (N-linked (GlcNAc...) asparagine).

It localises to the lysosome. It carries out the reaction cholesterol(in) = cholesterol(out). Its function is as follows. The large binding pocket can accommodate several single chain phospholipids and fatty acids, GM2A also exhibits some calcium-independent phospholipase activity. Binds gangliosides and stimulates ganglioside GM2 degradation. It stimulates only the breakdown of ganglioside GM2 and glycolipid GA2 by beta-hexosaminidase A. It extracts single GM2 molecules from membranes and presents them in soluble form to beta-hexosaminidase A for cleavage of N-acetyl-D-galactosamine and conversion to GM3. Has cholesterol transfer activity. In Macaca fascicularis (Crab-eating macaque), this protein is Ganglioside GM2 activator (GM2A).